Reading from the N-terminus, the 381-residue chain is Sharpin (381 aa).

The self-association stretch occupies residues methionine 1–alanine 177. The segment covering glutamate 121 to proline 131 has biased composition (polar residues). Positions glutamate 121–alanine 153 are disordered. The span at valine 132 to proline 142 shows a compositional bias: pro residues. Residues leucine 172 to glycine 305 form an interaction with SHANK1 region. A Ubiquitin-like domain is found at isoleucine 216 to valine 285. Position 307 is a phosphoserine (serine 307). The RanBP2-type zinc-finger motif lies at proline 342 to cysteine 371.

As to quaternary structure, monomer and homodimer. Component of the LUBAC complex (linear ubiquitin chain assembly complex) which consists of SHARPIN, RBCK1 and RNF31. LUBAC has a MW of approximately 600 kDa suggesting a heteromultimeric assembly of its subunits. Associates with the TNF-R1 signaling complex (TNF-RSC) in a stimulation-dependent manner. Interacts with EYA1, EYA2, SHANK1 and SHANK3 (via ANK repeats). Expressed in brain, spleen, lung, heart, skeletal muscle, kidney and testis (at protein level). Expressed in heart and testis.

Its subcellular location is the cytoplasm. The protein localises to the synapse. Its pathway is protein modification; protein ubiquitination. Functionally, component of the LUBAC complex which conjugates linear polyubiquitin chains in a head-to-tail manner to substrates and plays a key role in NF-kappa-B activation and regulation of inflammation. LUBAC conjugates linear polyubiquitin to IKBKG and RIPK1 and is involved in activation of the canonical NF-kappa-B and the JNK signaling pathways. Linear ubiquitination mediated by the LUBAC complex interferes with TNF-induced cell death and thereby prevents inflammation. LUBAC is recruited to the TNF-R1 signaling complex (TNF-RSC) following polyubiquitination of TNF-RSC components by BIRC2 and/or BIRC3 and to conjugate linear polyubiquitin to IKBKG and possibly other components contributing to the stability of the complex. The LUBAC complex is also involved in innate immunity by conjugating linear polyubiquitin chains at the surface of bacteria invading the cytosol to form the ubiquitin coat surrounding bacteria. LUBAC is not able to initiate formation of the bacterial ubiquitin coat, and can only promote formation of linear polyubiquitins on pre-existing ubiquitin. The bacterial ubiquitin coat acts as an 'eat-me' signal for xenophagy and promotes NF-kappa-B activation. Together with OTULIN, the LUBAC complex regulates the canonical Wnt signaling during angiogenesis. The sequence is that of Sharpin (Sharpin) from Rattus norvegicus (Rat).